Consider the following 109-residue polypeptide: Nucleoid-associated protein plu3840 (109 aa).

Disordered regions lie at residues 1–23 and 89–109; these read MFGK…KMQK and KEKM…KMPF.

Belongs to the YbaB/EbfC family. In terms of assembly, homodimer.

The protein localises to the cytoplasm. The protein resides in the nucleoid. In terms of biological role, binds to DNA and alters its conformation. May be involved in regulation of gene expression, nucleoid organization and DNA protection. This Photorhabdus laumondii subsp. laumondii (strain DSM 15139 / CIP 105565 / TT01) (Photorhabdus luminescens subsp. laumondii) protein is Nucleoid-associated protein plu3840.